We begin with the raw amino-acid sequence, 31 residues long: Kalata-B9 (31 aa).

The cyclopeptide (Gly-Asp) cross-link spans 1 to 31; that stretch reads GSVFNCGETCVLGTCYTPGCTCNTYRVCTKD. Cystine bridges form between cysteine 6–cysteine 20, cysteine 10–cysteine 22, and cysteine 15–cysteine 28.

The protein belongs to the cyclotide family. Bracelet subfamily. This peptide occurs in both cyclic and linear forms.

Probably participates in a plant defense mechanism. The chain is Kalata-B9 from Oldenlandia affinis.